We begin with the raw amino-acid sequence, 207 residues long: LexA repressor (207 aa).

The segment at residues 28-48 (VREIGEAVGLASSSTVHGHLA) is a DNA-binding region (H-T-H motif). Active-site for autocatalytic cleavage activity residues include S129 and K167.

It belongs to the peptidase S24 family. Homodimer.

It catalyses the reaction Hydrolysis of Ala-|-Gly bond in repressor LexA.. Functionally, represses a number of genes involved in the response to DNA damage (SOS response), including recA and lexA. In the presence of single-stranded DNA, RecA interacts with LexA causing an autocatalytic cleavage which disrupts the DNA-binding part of LexA, leading to derepression of the SOS regulon and eventually DNA repair. This is LexA repressor from Geobacillus thermodenitrificans (strain NG80-2).